The following is a 209-amino-acid chain: V-type ATP synthase subunit D (209 aa).

This sequence belongs to the V-ATPase D subunit family.

Functionally, produces ATP from ADP in the presence of a proton gradient across the membrane. The protein is V-type ATP synthase subunit D (atpD) of Chlamydia pneumoniae (Chlamydophila pneumoniae).